We begin with the raw amino-acid sequence, 131 residues long: Small ribosomal subunit protein uS8 (131 aa).

The protein belongs to the universal ribosomal protein uS8 family. In terms of assembly, part of the 30S ribosomal subunit. Contacts proteins S5 and S12.

In terms of biological role, one of the primary rRNA binding proteins, it binds directly to 16S rRNA central domain where it helps coordinate assembly of the platform of the 30S subunit. The protein is Small ribosomal subunit protein uS8 of Chlorobium phaeovibrioides (strain DSM 265 / 1930) (Prosthecochloris vibrioformis (strain DSM 265)).